Reading from the N-terminus, the 203-residue chain is Putative zinc finger protein 876 (203 aa).

4 consecutive C2H2-type zinc fingers follow at residues 63–85 (YTCE…KNIH), 91–113 (YKCE…KRIH), 119–141 (YKCE…KKIH), and 147–169 (YKCK…TNIH). A C2H2-type 5; degenerate zinc finger spans residues 175 to 197 (YTCEECGKDFTWSSTLTVHQRIQ).

The protein belongs to the krueppel C2H2-type zinc-finger protein family.

The protein localises to the nucleus. Its function is as follows. May be involved in transcriptional regulation. This Homo sapiens (Human) protein is Putative zinc finger protein 876 (ZNF876P).